The following is a 703-amino-acid chain: MKTLFIAPTRNGVGLTSTALGLLRALERQGLKVAFLKPIAQTHEAAPDDSVHWARTLAHAVTPDPILLSVAEEQLSQGQEEELMENVVALAREAAAGVTGGADVLVVEGLALNERNVYAGPLNASLARNLEADVVLVSSLAGVTPATLADELEIAAQAYRRSDGSGLAGYVLNFAPLELDFGGLLADLRARSRILASGELPLLGVIAQSPTLAAPRTLDVARHLGAEVLNEGEARLRRVTSTVVTARSVPKMADLFTSGALVVTPGDREDVVMAAALSHLSGVPLAGLLFTSGSTPEAAIERLCRAALTSTLPVLRVETNSYNTASRLSRMEARVPHDDLERMERTLDFIADRLDTVPLGTRLRAPEGSERRLPPSAFRYELIQKARAANKRIVLPEGDEPRTVRAAIRCVEKGIARCVLLAQPEKVRQVAEGQGLTLPDGLEIIDPDRVRANYVAPMVELRKHKGLTAPQAEAQLEDNVVLGTMMLALDEVDGLVSGAVHTTANTVRPALQLIKTAPGVRLVSSIFFMLMPEQVVVYGDAAINPNPNAEELADIAIQSADSARAFGIPPRIAMLSYSTGESGAGADVEKVRIATRLVRERRPDLPVDGPLQYDAASVLSVGRQKAPNSPVAGRATVFIFPDLNTGNTTYKAVQRAAGVVAVGPMLQGLRKPVNDLSRGALVDDIVYTIALTAIQATQAREGA.

The phosphate acetyltransferase stretch occupies residues 377-703; the sequence is AFRYELIQKA…IQATQAREGA (327 aa).

The protein in the N-terminal section; belongs to the CobB/CobQ family. It in the C-terminal section; belongs to the phosphate acetyltransferase and butyryltransferase family.

It localises to the cytoplasm. It carries out the reaction acetyl-CoA + phosphate = acetyl phosphate + CoA. Its pathway is metabolic intermediate biosynthesis; acetyl-CoA biosynthesis; acetyl-CoA from acetate: step 2/2. Its function is as follows. Involved in acetate metabolism. This chain is Phosphate acetyltransferase (pta), found in Deinococcus geothermalis (strain DSM 11300 / CIP 105573 / AG-3a).